The sequence spans 576 residues: Colicin-E7 (576 aa).

Disordered regions lie at residues 1–75, 421–478, and 506–557; these read MSGG…GGGS, SSAL…PVPD, and DPEL…GVYD. A compositionally biased stretch (gly residues) spans 19–35; it reads NINGGPTGLGGNGGASD. Over residues 36-45 the composition is skewed to low complexity; that stretch reads GSGWSSENNP. The span at 46-75 shows a compositional bias: gly residues; the sequence is WGGGSGSGVHWGGGSGHGNGGGNSNSGGGS. Composition is skewed to basic and acidic residues over residues 424 to 447 and 535 to 548; these read LERRKQKENKEKDAKAKLDKESKR and SGKRTSFELHHEKP. H544, H569, and H573 together coordinate Zn(2+).

This sequence belongs to the colicin/pyosin nuclease family.

This plasmid-coded bactericidal protein is an endonuclease active on both single- and double-stranded DNA but with undefined specificity. In terms of biological role, colicins are polypeptide toxins produced by and active against E.coli and closely related bacteria. In Escherichia coli, this protein is Colicin-E7 (colE7).